The following is a 295-amino-acid chain: MELIQDISRPPLEYVKGVPLIKYFAEALGPLQSFQARPDDLLISTYPKSGTTWVSQILDMIYQGGDLEKCHRAPIFMRVPFLEFKVPGIPSGMETLKNTPAPRLLKTHLPLALLPQTLLDQKVKVVYVARNAKDVAVSYYHFYHMAKVYPHPGTWESFLEKFMAGEVSYGSWYQHVQEWWELSRTHPVLYLFYEDMKENPKREIQKILEFVGRSLPEETVDLMVEHTSFKEMKKNPMTNYTTVRREFMDHSISPFMRKGMAGDWKTTFTVAQNERFDADYAKKMAGCSLSFRSEL.

Residue 48–53 (KSGTTW) participates in 3'-phosphoadenylyl sulfate binding. Residue 106–108 (KTH) participates in substrate binding. The active-site Proton acceptor is the histidine 108. 3'-phosphoadenylyl sulfate-binding positions include arginine 130, serine 138, tyrosine 193, 227–232 (TSFKEM), and 255–259 (FMRKG).

It belongs to the sulfotransferase 1 family. In terms of assembly, homodimer.

Its subcellular location is the cytoplasm. The enzyme catalyses a phenol + 3'-phosphoadenylyl sulfate = an aryl sulfate + adenosine 3',5'-bisphosphate + H(+). In terms of biological role, sulfotransferase that utilizes 3'-phospho-5'-adenylyl sulfate (PAPS) as sulfonate donor to catalyze the sulfate conjugation of catecholamines, phenolic drugs and neurotransmitters. Is also responsible for the sulfonation and activation of minoxidil. Mediates the metabolic activation of carcinogenic N-hydroxyarylamines to DNA binding products and could so participate as modulating factor of cancer risk. This Homo sapiens (Human) protein is Sulfotransferase 1A2 (SULT1A2).